Here is a 209-residue protein sequence, read N- to C-terminus: Large ribosomal subunit protein uL3 (209 aa).

Belongs to the universal ribosomal protein uL3 family. Part of the 50S ribosomal subunit. Forms a cluster with proteins L14 and L19.

In terms of biological role, one of the primary rRNA binding proteins, it binds directly near the 3'-end of the 23S rRNA, where it nucleates assembly of the 50S subunit. The chain is Large ribosomal subunit protein uL3 from Brevibacillus brevis (strain 47 / JCM 6285 / NBRC 100599).